The following is a 328-amino-acid chain: Gonadotropin-releasing hormone receptor (328 aa).

Residues 1–38 (MANSASPEQNQNHCSAINSSILLTQGNLPTLTLSGKIR) are Extracellular-facing. The N-linked (GlcNAc...) asparagine glycan is linked to Asn-18. The chain crosses the membrane as a helical span at residues 39–58 (VTVTFFLFLLSTAFNASFLL). The Cytoplasmic portion of the chain corresponds to 59-77 (KLQKWTQRKEKGKKLSRMK). The chain crosses the membrane as a helical span at residues 78–97 (VLLKHLTLANLLETLIVMPL). The Extracellular segment spans residues 98–115 (DGMWNITVQWYAGEFLCK). A glycan (N-linked (GlcNAc...) asparagine) is linked at Asn-102. An intrachain disulfide couples Cys-114 to Cys-196. Residues 116-137 (VLSYLKLFSMYAPAFMMVVISL) form a helical membrane-spanning segment. Residues 138-164 (DRSLAITRPLAVKSNSRLGRFMIGLAW) are Cytoplasmic-facing. A helical transmembrane segment spans residues 165–184 (LLSSIFAGPQLYIFRMIHLA). Over 185–212 (DSSGQTEGFSQCVTHGSFPQWWHQAFYN) the chain is Extracellular. A helical transmembrane segment spans residues 213–232 (FFTFSCLFIIPLLIMLICNA). The Cytoplasmic segment spans residues 233-281 (KIMFTLTRVLQQDPHNLQLNQSKNNIPRARLRTLKMTVAFAASFIVCWT). The helical transmembrane segment at 282-300 (PYYVLGIWYWFDPEMVNRV) threads the bilayer. The Extracellular segment spans residues 301-306 (SDPVNH). Residues 307-326 (FFFLFAFLNPCFDPLIYGYF) form a helical membrane-spanning segment. Over 327–328 (SL) the chain is Cytoplasmic.

Belongs to the G-protein coupled receptor 1 family. In terms of tissue distribution, pituitary gland.

Its subcellular location is the cell membrane. Its function is as follows. Receptor for gonadotropin releasing hormone (GnRH) that mediates the action of GnRH to stimulate the secretion of the gonadotropic hormones luteinizing hormone (LH) and follicle-stimulating hormone (FSH). This receptor mediates its action by association with G-proteins that activate a phosphatidylinositol-calcium second messenger system. The protein is Gonadotropin-releasing hormone receptor (GNRHR) of Sus scrofa (Pig).